The following is a 249-amino-acid chain: 5'-nucleotidase SurE (249 aa).

A divalent metal cation contacts are provided by Asp-9, Asp-10, Ser-40, and Asn-92.

It belongs to the SurE nucleotidase family. It depends on a divalent metal cation as a cofactor.

The protein resides in the cytoplasm. The enzyme catalyses a ribonucleoside 5'-phosphate + H2O = a ribonucleoside + phosphate. Functionally, nucleotidase that shows phosphatase activity on nucleoside 5'-monophosphates. This chain is 5'-nucleotidase SurE, found in Shewanella sp. (strain MR-4).